The primary structure comprises 463 residues: Nitrogenase iron-molybdenum cofactor biosynthesis protein NifE (463 aa).

Belongs to the NifD/NifK/NifE/NifN family.

It participates in cofactor biosynthesis; Fe-Mo cofactor biosynthesis. This protein may play a role in the biosynthesis of the prosthetic group of nitrogenase (FeMo cofactor). The polypeptide is Nitrogenase iron-molybdenum cofactor biosynthesis protein NifE (nifE2) (Methanosarcina barkeri).